Here is a 634-residue protein sequence, read N- to C-terminus: DNA-directed RNA polymerase subunit gamma (634 aa).

Residues Cys74, Cys76, Cys89, and Cys92 each coordinate Zn(2+). Residues Asp471, Asp473, and Asp475 each contribute to the Mg(2+) site.

This sequence belongs to the RNA polymerase beta' chain family. RpoC1 subfamily. In terms of assembly, in cyanobacteria the RNAP catalytic core is composed of 2 alpha, 1 beta, 1 beta', 1 gamma and 1 omega subunit. When a sigma factor is associated with the core the holoenzyme is formed, which can initiate transcription. Mg(2+) is required as a cofactor. The cofactor is Zn(2+).

The enzyme catalyses RNA(n) + a ribonucleoside 5'-triphosphate = RNA(n+1) + diphosphate. In terms of biological role, DNA-dependent RNA polymerase catalyzes the transcription of DNA into RNA using the four ribonucleoside triphosphates as substrates. The sequence is that of DNA-directed RNA polymerase subunit gamma from Prochlorococcus marinus (strain MIT 9303).